A 750-amino-acid polypeptide reads, in one-letter code: NAD(P)H-quinone oxidoreductase subunit 5, chloroplastic (750 aa).

Helical transmembrane passes span 9–29, 40–60, 89–109, 125–145, 147–167, 185–205, 230–250, 258–278, 283–303, 327–347, 354–374, 396–416, 425–445, 548–568, 607–627, and 724–744; these read WIIP…LLLF, WAFT…NLSI, IDPL…MVLI, FAYM…SNLI, IYIF…FWFT, GDFG…SFEF, AALL…HIWL, TPIS…FLVA, LFIV…ITVL, LGYM…FHLI, ALLF…VGYS, TSFL…CFWS, WLYS…TAFY, LFPL…GIPF, IFSV…YKPI, and LFFY…FYLF.

This sequence belongs to the complex I subunit 5 family. In terms of assembly, NDH is composed of at least 16 different subunits, 5 of which are encoded in the nucleus.

It localises to the plastid. It is found in the chloroplast thylakoid membrane. The catalysed reaction is a plastoquinone + NADH + (n+1) H(+)(in) = a plastoquinol + NAD(+) + n H(+)(out). The enzyme catalyses a plastoquinone + NADPH + (n+1) H(+)(in) = a plastoquinol + NADP(+) + n H(+)(out). In terms of biological role, NDH shuttles electrons from NAD(P)H:plastoquinone, via FMN and iron-sulfur (Fe-S) centers, to quinones in the photosynthetic chain and possibly in a chloroplast respiratory chain. The immediate electron acceptor for the enzyme in this species is believed to be plastoquinone. Couples the redox reaction to proton translocation, and thus conserves the redox energy in a proton gradient. This chain is NAD(P)H-quinone oxidoreductase subunit 5, chloroplastic (ndhF), found in Tecoma stans (Yellow bells).